The following is a 499-amino-acid chain: Glycerol kinase (499 aa).

Thr-12 lines the ADP pocket. Residues Thr-12, Thr-13, and Ser-14 each coordinate ATP. Thr-12 is a sn-glycerol 3-phosphate binding site. Arg-16 serves as a coordination point for ADP. Arg-82, Glu-83, and Tyr-134 together coordinate sn-glycerol 3-phosphate. Glycerol-binding residues include Arg-82, Glu-83, and Tyr-134. At His-230 the chain carries Phosphohistidine; by HPr. Asp-244 contacts sn-glycerol 3-phosphate. Residues Asp-244 and Gln-245 each coordinate glycerol. Residues Thr-266 and Gly-309 each contribute to the ADP site. ATP contacts are provided by Thr-266, Gly-309, Gln-313, and Gly-410. Positions 410 and 414 each coordinate ADP.

This sequence belongs to the FGGY kinase family. As to quaternary structure, homotetramer and homodimer (in equilibrium). The phosphoenolpyruvate-dependent sugar phosphotransferase system (PTS), including enzyme I, and histidine-containing protein (HPr) are required for the phosphorylation, which leads to the activation of the enzyme.

It carries out the reaction glycerol + ATP = sn-glycerol 3-phosphate + ADP + H(+). The protein operates within polyol metabolism; glycerol degradation via glycerol kinase pathway; sn-glycerol 3-phosphate from glycerol: step 1/1. Its activity is regulated as follows. Activated by phosphorylation and inhibited by fructose 1,6-bisphosphate (FBP). Key enzyme in the regulation of glycerol uptake and metabolism. Catalyzes the phosphorylation of glycerol to yield sn-glycerol 3-phosphate. This Staphylococcus haemolyticus (strain JCSC1435) protein is Glycerol kinase.